A 149-amino-acid polypeptide reads, in one-letter code: UPF0178 protein VF_0601 (149 aa).

This sequence belongs to the UPF0178 family.

In Aliivibrio fischeri (strain ATCC 700601 / ES114) (Vibrio fischeri), this protein is UPF0178 protein VF_0601.